A 121-amino-acid chain; its full sequence is Large ribosomal subunit protein bL12 (121 aa).

This sequence belongs to the bacterial ribosomal protein bL12 family. Homodimer. Part of the ribosomal stalk of the 50S ribosomal subunit. Forms a multimeric L10(L12)X complex, where L10 forms an elongated spine to which 2 to 4 L12 dimers bind in a sequential fashion. Binds GTP-bound translation factors.

Functionally, forms part of the ribosomal stalk which helps the ribosome interact with GTP-bound translation factors. Is thus essential for accurate translation. This chain is Large ribosomal subunit protein bL12, found in Malacoplasma penetrans (strain HF-2) (Mycoplasma penetrans).